Reading from the N-terminus, the 327-residue chain is Methionyl-tRNA formyltransferase (327 aa).

Position 122 to 125 (serine 122 to proline 125) interacts with (6S)-5,6,7,8-tetrahydrofolate.

This sequence belongs to the Fmt family.

It catalyses the reaction L-methionyl-tRNA(fMet) + (6R)-10-formyltetrahydrofolate = N-formyl-L-methionyl-tRNA(fMet) + (6S)-5,6,7,8-tetrahydrofolate + H(+). Functionally, attaches a formyl group to the free amino group of methionyl-tRNA(fMet). The formyl group appears to play a dual role in the initiator identity of N-formylmethionyl-tRNA by promoting its recognition by IF2 and preventing the misappropriation of this tRNA by the elongation apparatus. The protein is Methionyl-tRNA formyltransferase of Ralstonia nicotianae (strain ATCC BAA-1114 / GMI1000) (Ralstonia solanacearum).